A 410-amino-acid polypeptide reads, in one-letter code: MYFLGLLSLLVLPSKAFKTNFPDETIAELSVNVYNQLRAAREDENILFCPLSIAIAMGMIELGAHGTTLKEIRHSLGFDSLKNGEEFTFLKDLSDMATTEESHYVLNMANSLYVQNGFHVSEKFLQLVKKYFKAEVENIDFSQSAAVATHINKWVENHTNNMIKDFVSSRDFSALTHLVLINAIYFKGNWKSQFRPENTRTFSFTKDDETEVQIPMMYQQGEFYYGEFSDGSNEAGGIYQVLEIPYEGDEISMMIVLSRQEVPLVTLEPLVKASLINEWANSVKKQKVEVYLPRFTVEQEIDLKDVLKGLGITEVFSRSADLTAMSDNKELYLAKAFHKAFLEVNEEGSEAAAASGMIAISRMAVLYPQVIVDHPFFFLVRNRRTGTVLFMGRVMHPEAMNTSGHDFEEL.

An N-terminal signal peptide occupies residues 1-16 (MYFLGLLSLLVLPSKA). Residues N157 and N401 are each glycosylated (N-linked (GlcNAc...) asparagine).

Belongs to the serpin family. Detected in embryonic ocular vitreous fluid (at protein level). In the embryo present in retina, brain, cerebellum and spinal cord. In adult, predominantly expressed in the brain.

It is found in the secreted. It localises to the cytoplasmic vesicle. Its subcellular location is the secretory vesicle lumen. The protein resides in the perikaryon. In terms of biological role, serine protease inhibitor that inhibits plasminogen activators and plasmin but not thrombin. May be involved in the formation or reorganization of synaptic connections as well as for synaptic plasticity in the adult nervous system. May protect neurons from cell damage by tissue-type plasminogen activator. The chain is Neuroserpin (SERPINI1) from Gallus gallus (Chicken).